The sequence spans 348 residues: D-alanine--D-alanine ligase (348 aa).

The 203-residue stretch at 132-334 (KRILEVAGVP…YSDLIKELVV (203 aa)) folds into the ATP-grasp domain. ATP is bound at residue 162 to 217 (LEKLTFPVFVKPANMGSSVGISKAENESELRSAIDLALKYDSRILIEQGVVAREIE). Mg(2+) is bound by residues D288, E301, and N303.

The protein belongs to the D-alanine--D-alanine ligase family. Mg(2+) serves as cofactor. Mn(2+) is required as a cofactor.

It localises to the cytoplasm. It catalyses the reaction 2 D-alanine + ATP = D-alanyl-D-alanine + ADP + phosphate + H(+). It participates in cell wall biogenesis; peptidoglycan biosynthesis. In terms of biological role, cell wall formation. The polypeptide is D-alanine--D-alanine ligase (Streptococcus thermophilus (strain ATCC BAA-491 / LMD-9)).